Reading from the N-terminus, the 447-residue chain is Transcriptional enhancer factor TEF-4 (447 aa).

Disordered regions lie at residues 1–46 and 183–218; these read MGEP…GVWS and TPFT…PPAW. The span at 11–20 shows a compositional bias: low complexity; sequence DDGSGWTGSE. Over residues 25–40 the composition is skewed to gly residues; it reads EGTGGSEGAGGDGGPD. Residues 38–114 constitute a DNA-binding region (TEA); that stretch reads GPDAEGVWSP…QVLARRKSRE (77 aa). The interval 172–447 is transcriptional activation; that stretch reads WNVPDVKPFS…QHHIYRLVRD (276 aa). Over residues 183 to 206 the composition is skewed to low complexity; that stretch reads TPFTLSLTPPSTDLPGYEPPQALS. A compositionally biased stretch (pro residues) spans 207 to 216; the sequence is PLPPPTPSPP.

Interacts with YAP1 and WWTR1/TAZ.

The protein localises to the nucleus. Functionally, transcription factor which plays a key role in the Hippo signaling pathway, a pathway involved in organ size control and tumor suppression by restricting proliferation and promoting apoptosis. The core of this pathway is composed of a kinase cascade wherein MST1/MST2, in complex with its regulatory protein SAV1, phosphorylates and activates LATS1/2 in complex with its regulatory protein MOB1, which in turn phosphorylates and inactivates YAP1 oncoprotein and WWTR1/TAZ. Acts by mediating gene expression of YAP1 and WWTR1/TAZ, thereby regulating cell proliferation, migration and epithelial mesenchymal transition (EMT) induction. Binds to the SPH and GT-IIC 'enhansons' (5'-GTGGAATGT-3'). May be involved in the gene regulation of neural development. Binds to the M-CAT motif. The protein is Transcriptional enhancer factor TEF-4 (TEAD2) of Homo sapiens (Human).